Reading from the N-terminus, the 373-residue chain is Arfaptin-1 (373 aa).

The segment at 1-47 (MAQESPKNSAAEIPVTSNGEVDDAHEHGYNRDLKHSLPSGLGLSETQ) is disordered. Ala-2 is modified (N-acetylalanine). A Phosphoserine modification is found at Ser-5. The span at 22–35 (DDAHEHGYNRDLKH) shows a compositional bias: basic and acidic residues. Ser-36, Ser-39, Ser-69, Ser-79, and Ser-132 each carry phosphoserine. Positions 153 to 353 (TVDLELEAQI…NQKQLELTLK (201 aa)) constitute an AH domain. At Thr-361 the chain carries Phosphothreonine.

As to quaternary structure, forms homodimers or heterodimers with ARFIP2. Interacts with non-myristoylated GTP-bound ARF3, but not to GDP-bound ARF3. Interacts with ARF1. Binds with lower affinity to ARF5 and with very little affinity to ARF6. Interacts with ARL1. Interacts with ATG9A. In terms of processing, phosphorylated by PRKD1; phosphorylation delocalizes ARFIP1 from the Golgi and disrupts its ability to inhibit the activity of ADP-ribosylation factor, an important component of the vesicle scission machinery.

It localises to the golgi apparatus. The protein localises to the trans-Golgi network membrane. In terms of biological role, plays a role in controlling biogenesis of secretory granules at the trans-Golgi network. Mechanistically, binds ARF-GTP at the neck of a growing secretory granule precursor and forms a protective scaffold. Once the granule precursor has been completely loaded, active PRKD1 phosphorylates ARFIP1 and releases it from ARFs. In turn, ARFs induce fission. Through this mechanism, ensures proper secretory granule formation at the Golgi of pancreatic beta cells. The polypeptide is Arfaptin-1 (Mus musculus (Mouse)).